A 230-amino-acid polypeptide reads, in one-letter code: 3-dehydroquinate dehydratase (230 aa).

Residues Ser-26, 51-53 (EIR), and Arg-84 contribute to the 3-dehydroquinate site. The Proton donor/acceptor role is filled by His-127. Lys-150 (schiff-base intermediate with substrate) is an active-site residue. 3-dehydroquinate is bound by residues Arg-190, Thr-209, and Gln-213.

This sequence belongs to the type-I 3-dehydroquinase family. As to quaternary structure, homodimer.

It catalyses the reaction 3-dehydroquinate = 3-dehydroshikimate + H2O. The protein operates within metabolic intermediate biosynthesis; chorismate biosynthesis; chorismate from D-erythrose 4-phosphate and phosphoenolpyruvate: step 3/7. Involved in the third step of the chorismate pathway, which leads to the biosynthesis of aromatic amino acids. Catalyzes the cis-dehydration of 3-dehydroquinate (DHQ) and introduces the first double bond of the aromatic ring to yield 3-dehydroshikimate. The sequence is that of 3-dehydroquinate dehydratase from Thermoplasma volcanium (strain ATCC 51530 / DSM 4299 / JCM 9571 / NBRC 15438 / GSS1).